We begin with the raw amino-acid sequence, 134 residues long: Thionin-2.1 (134 aa).

The N-terminal stretch at M1 to A24 is a signal peptide. Intrachain disulfides connect C27–C61, C28–C55, and C40–C49. The propeptide at A68–L134 is acidic domain.

It belongs to the plant thionin (TC 1.C.44) family. In terms of tissue distribution, detected in rosette leaves and at a very high level in flowers and in siliques.

It is found in the secreted. Functionally, seems to function as a defense factor. Thionins are small plant proteins which are toxic to animal cells. They seem to exert their toxic effect at the level of the cell membrane. Their precise function is not known. The protein is Thionin-2.1 (THI2.1) of Arabidopsis thaliana (Mouse-ear cress).